A 375-amino-acid chain; its full sequence is DNA replication and repair protein RecF (375 aa).

30 to 37 provides a ligand contact to ATP; it reads GENAQGKT.

Belongs to the RecF family.

It is found in the cytoplasm. In terms of biological role, the RecF protein is involved in DNA metabolism; it is required for DNA replication and normal SOS inducibility. RecF binds preferentially to single-stranded, linear DNA. It also seems to bind ATP. This is DNA replication and repair protein RecF from Bacillus cereus (strain ZK / E33L).